The chain runs to 141 residues: Large ribosomal subunit protein uL11 (141 aa).

This sequence belongs to the universal ribosomal protein uL11 family. As to quaternary structure, part of the ribosomal stalk of the 50S ribosomal subunit. Interacts with L10 and the large rRNA to form the base of the stalk. L10 forms an elongated spine to which L12 dimers bind in a sequential fashion forming a multimeric L10(L12)X complex. One or more lysine residues are methylated.

In terms of biological role, forms part of the ribosomal stalk which helps the ribosome interact with GTP-bound translation factors. This is Large ribosomal subunit protein uL11 from Limosilactobacillus fermentum (strain NBRC 3956 / LMG 18251) (Lactobacillus fermentum).